The chain runs to 459 residues: UDP-N-acetylmuramoylalanine--D-glutamate ligase (459 aa).

119–125 (GTNGKTT) serves as a coordination point for ATP.

This sequence belongs to the MurCDEF family.

Its subcellular location is the cytoplasm. The catalysed reaction is UDP-N-acetyl-alpha-D-muramoyl-L-alanine + D-glutamate + ATP = UDP-N-acetyl-alpha-D-muramoyl-L-alanyl-D-glutamate + ADP + phosphate + H(+). Its pathway is cell wall biogenesis; peptidoglycan biosynthesis. Cell wall formation. Catalyzes the addition of glutamate to the nucleotide precursor UDP-N-acetylmuramoyl-L-alanine (UMA). In Lacticaseibacillus casei (strain BL23) (Lactobacillus casei), this protein is UDP-N-acetylmuramoylalanine--D-glutamate ligase.